Consider the following 85-residue polypeptide: Large ribosomal subunit protein bL27 (85 aa).

Residues 1–20 (MAHKKAGGSTRNGRDSEAKR) form a disordered region.

Belongs to the bacterial ribosomal protein bL27 family.

The sequence is that of Large ribosomal subunit protein bL27 from Klebsiella pneumoniae (strain 342).